A 540-amino-acid chain; its full sequence is MAIPKTMEAPFTHLFLNLTVMTLGQILVIPVALLVVYICIRIGSIRRQFRDLPKPPHHAFLGHFPILLRELRTLPRDIFAPLVVDLVRRKFDLPAVFFLDLYPLFNPIVFISDPGLARKITQEDRSLRYPGVFETLYPAIPTRWFRTVADRAWTKWHPVVGVSFTAAHFVRMVPQMAEDLRAMLDQLNDWSDRDEIFCMERVATDAILAMTGRAYFGMELDCFAPKSQWTSAFRAATTPVVAARNPLRKPFVLPSWKRHARTFHAVIREKVQHTFDKDENHEAGVPSLLASSFAVYRKNGFPEFPRVSQEALSTEYLEELTSTGAAFLIGATSGASVISYAFLLLHQHPNILDDLRREHGQVCGFNRQSILLALQSRPRLLNDLKLTHAVLKETLRLFPMGPVLRKCPSETMEYEGRTYDIRNHIVAISHNSLHRRPDLFPNPDAFNPYRFLPGAAIPIPADAWRPFEKGNGYCVGQELAMIQMKVMLLLTLTEFDFQPKYAREAARGPDIYGGYAYTTGSGIGPTPAGGLPMRVDKRMK.

N17 carries N-linked (GlcNAc...) asparagine glycosylation. 2 consecutive transmembrane segments (helical) span residues 20 to 40 (VMTLGQILVIPVALLVVYICI) and 325 to 345 (AAFLIGATSGASVISYAFLLL). Residue C474 coordinates heme.

It belongs to the cytochrome P450 family. The cofactor is heme.

It localises to the membrane. It functions in the pathway secondary metabolite biosynthesis. Its function is as follows. Cytochrome P450 monooxygenase; part of the gene cluster that mediates the biosynthesis of the indole diterpenes penitrems. The geranylgeranyl diphosphate (GGPP) synthase ptmG catalyzes the first step in penitrem biosynthesis via conversion of farnesyl pyrophosphate and isopentyl pyrophosphate into geranylgeranyl pyrophosphate (GGPP). Condensation of indole-3-glycerol phosphate with GGPP by the prenyl transferase ptmC then forms 3-geranylgeranylindole (3-GGI). Epoxidation by the FAD-dependent monooxygenase ptmM leads to a epoxidized-GGI that is substrate of the terpene cyclase ptmB for cyclization to yield paspaline. Paspaline is subsequently converted to 13-desoxypaxilline by the cytochrome P450 monooxygenase ptmP, the latter being then converted to paxilline by the cytochrome P450 monooxygenase ptmQ. Paxilline is converted to beta-paxitriol via C-10 ketoreduction by the short-chain dehydrogenase ptmH which can be monoprenylated at the C-20 by the indole diterpene prenyltransferase ptmD. A two-step elimination (acetylation and elimination) process performed by the O-acetyltransferase ptmV and ptmI leads to the production of the prenylated form of penijanthine. The FAD-linked oxidoreductase ptmO then converts the prenylated form of penijanthine into PC-M5 which is in turn transformed into PC-M4 by the aromatic dimethylallyltransferase ptmE. Five sequential oxidative transformations performed by the cytochrome P450 monooxygenases ptmK, ptmU, ptmL, ptmN and ptmJ yield the various penitrem compounds. PtmK, ptmU and ptmM are involved in the formation of the key bicyclic ring of penitrem C via the formation of the intermediates secopenitrem D and penitrem D. PtmL catalyzes the epoxidation of penitrem D and C to yield penitrem B and F, respectively. PtmJ catalyzes the last benzylic hydroxylation to convert penitrem B to prenitrem E and penitrem F to penitrem A. The polypeptide is Cytochrome P450 monooxygenase ptmG (Penicillium ochrochloron).